We begin with the raw amino-acid sequence, 92 residues long: mRNA interferase toxin YafQ (92 aa).

Residue H87 is the Proton donor of the active site.

This sequence belongs to the RelE toxin family. YafQ subfamily. As to quaternary structure, monomer in the absence of antitoxin. Forms a heterotetramer with antitoxin DinJ, with 2 YafQ-DinJ dimers associated via the N-terminus of the DinJ antitoxins (YafQ-(DinJ)2-YafQ). In this complex the toxin activity is inhibited. Binds the 70S ribosome via the 50S ribosomal subunit.

Toxic component of a type II toxin-antitoxin (TA) system. A sequence-specific mRNA endoribonuclease that inhibits translation elongation and induces bacterial stasis. Cleavage occurs between the second and third residue of the Lys codon followed by a G or A (5'AAA(G/A)3'), is reading-frame dependent and occurs within the 5' end of most mRNAs. Ribosome-binding confers the sequence specificity and reading frame-dependence. When overexpressed in liquid media YafQ partially inhibits protein synthesis, with a reduction in growth rate and colony growth rate. This effect is counteracted by coexpression with cognate antitoxin DinJ. YafQ and DinJ together bind their own promoter, and repress its expression. Its function is as follows. Cell death governed by the MazE-MazF and DinJ-YafQ TA systems seems to play a role in biofilm formation. The protein is mRNA interferase toxin YafQ (yafQ) of Escherichia coli (strain K12).